A 252-amino-acid chain; its full sequence is NAC domain-containing protein 23 (252 aa).

Residues 12-177 enclose the NAC domain; sequence MPPGFRFQPT…EMVLCRISNK (166 aa). Residues 110-183 mediate DNA binding; that stretch reads TAVKRRFVFY…ISNKDLPKPP (74 aa). A disordered region spans residues 225–252; that stretch reads VDDAAAADDDPGDLDEEIDDSMQRNHGG. Over residues 229–244 the composition is skewed to acidic residues; sequence AAADDDPGDLDEEIDD.

In terms of assembly, forms heterodimers with NAC26. As to expression, expressed in stems and panicles. Expressed in developing seeds.

It is found in the nucleus. Its subcellular location is the cytoplasm. In terms of biological role, transcription factor involved in the regulation of seed size. Possesses transactivation activity in yeast. This Oryza sativa subsp. indica (Rice) protein is NAC domain-containing protein 23.